Here is a 397-residue protein sequence, read N- to C-terminus: Aurora kinase A (397 aa).

The disordered stretch occupies residues 1-118; the sequence is MDRCKENCVS…SIQKTEDSKK (118 aa). 2 stretches are compositionally biased toward polar residues: residues 29–55 and 84–102; these read QIPS…SQRV and RLSN…SGNN. 2 positions are modified to phosphoserine: S40 and S50. The span at 103–118 shows a compositional bias: basic and acidic residues; it reads SEKEQTSIQKTEDSKK. The 251-residue stretch at 126 to 376 folds into the Protein kinase domain; it reads FDIGRPLGKG…LAEVLEHPWI (251 aa). ATP contacts are provided by residues K136, K155, and 203 to 206; that span reads LEYA. D249 acts as the Proton acceptor in catalysis. K251 is covalently cross-linked (Glycyl lysine isopeptide (Lys-Gly) (interchain with G-Cter in SUMO2)). ATP contacts are provided by residues 253-254 and D267; that span reads EN. An activation segment region spans residues 273-286; that stretch reads HAPSSRRTTLCGTL. Phosphothreonine is present on residues T280 and T281. S335 carries the phosphoserine; by PKA and PAK modification. Positions 378-387 are enriched in polar residues; the sequence is ANSSKPPTGH. The interval 378-397 is disordered; it reads ANSSKPPTGHNSKEATSKSS. The segment covering 388–397 has biased composition (basic and acidic residues); sequence NSKEATSKSS.

This sequence belongs to the protein kinase superfamily. Ser/Thr protein kinase family. Aurora subfamily. As to quaternary structure, part of a complex composed of NEDD9, AURKA and CTTN; within the complex NEDD9 acts as a scaffold protein and is required for complex formation. Identified in a complex with AUNIP and NIN. Interacts with CPEB1, JTB, TACC1, TPX2, PPP2CA, as well as with the protein phosphatase type 1 (PP1) isoforms PPP1CA, PPP1CB and PPP1CC. Also interacts with its substrates ARHGEF2, BORA, KIF2A, PARD3, and p53/TP53. Interaction with BORA promotes phosphorylation of PLK1. Interacts with FBXL7 and CIMAP3. Interacts with GADD45A, competing with its oligomerization. Interacts (via C-terminus) with AUNIP (via C-terminus). Interacts with SIRT2. Interacts with FRY; this interaction facilitates AURKA-mediated PLK1 phosphorylation. Interacts with MYCN; interaction is phospho-independent and triggers AURKA activation; AURKA competes with FBXW7 for binding to unphosphorylated MYCN but not for binding to phosphorylated MYCN. Interacts with HNRNPU. Interacts with AAAS. Interacts with KLHL18 and CUL3. Interacts with FOXP1. Interacts with HDAC6; AURKA-mediated phosphorylation of HDAC6 promotes deacetylation of alpha-tubulin. In terms of processing, activated by phosphorylation at Thr-281; this brings about a change in the conformation of the activation segment. Phosphorylation at Thr-281 varies during the cell cycle and is highest during M phase. Autophosphorylated at Thr-281 upon TPX2 binding. Thr-281 can be phosphorylated by several kinases, including PAK and PKA. Protein phosphatase type 1 (PP1) binds AURKA and inhibits its activity by dephosphorylating Thr-281 during mitosis. Phosphorylation at Ser-335 decreases the kinase activity. PPP2CA controls degradation by dephosphorylating Ser-52 at the end of mitosis. Phosphorylated in embryonic brain neurons. Ubiquitinated by CHFR, leading to its degradation by the proteasome. Ubiquitinated by the anaphase-promoting complex (APC), leading to its degradation by the proteasome. Ubiquitinated by the E3 ubiquitin-protein ligase complex SCF(FBXL7) during mitosis, leading to its degradation by the proteasome. Ubiquitinated by the CUL3-KLHL18 ligase leading to its activation at the centrosome which is required for initiating mitotic entry. Ubiquitination mediated by CUL3-KLHL18 ligase does not lead to its degradation by the proteasome. Detected in neurons in brain cortex and hippocampus (at protein level). Expressed in mammary gland and tumor.

The protein resides in the cytoplasm. It is found in the cytoskeleton. It localises to the microtubule organizing center. The protein localises to the centrosome. Its subcellular location is the spindle pole. The protein resides in the centriole. It is found in the cell projection. It localises to the neuron projection. The protein localises to the cilium. Its subcellular location is the cilium basal body. The protein resides in the basolateral cell membrane. It carries out the reaction L-seryl-[protein] + ATP = O-phospho-L-seryl-[protein] + ADP + H(+). The enzyme catalyses L-threonyl-[protein] + ATP = O-phospho-L-threonyl-[protein] + ADP + H(+). Activation of CDK1, appears to be an upstream event of AURKA activation. Phosphatase inhibitor-2 (PPP1R2) and TPX2 act also as activators. Inactivated by the G2 checkpoint. Inhibited by GADD45A and p53/TP53, and through dephosphorylation by protein phosphatase type 1 (PP1). MLN8054 is also a potent and selective inhibitor. Activated during the early phase of cilia disassembly in the presence of FBXL7 and CIMAP3. Inhibited by the small molecule inhibitor VX-680. In terms of biological role, mitotic serine/threonine kinase that contributes to the regulation of cell cycle progression. Associates with the centrosome and the spindle microtubules during mitosis and plays a critical role in various mitotic events including the establishment of mitotic spindle, centrosome duplication, centrosome separation as well as maturation, chromosomal alignment, spindle assembly checkpoint, and cytokinesis. Required for normal spindle positioning during mitosis and for the localization of NUMA1 and DCTN1 to the cell cortex during metaphase. Required for initial activation of CDK1 at centrosomes. Phosphorylates numerous target proteins, including ARHGEF2, BORA, BRCA1, CDC25B, DLGP5, HDAC6, KIF2A, LATS2, NDEL1, PARD3, PPP1R2, PLK1, RASSF1, TACC3, p53/TP53 and TPX2. Phosphorylates MCRS1 which is required for MCRS1-mediated kinetochore fiber assembly and mitotic progression. Regulates KIF2A tubulin depolymerase activity. Required for normal axon formation. Plays a role in microtubule remodeling during neurite extension. Important for microtubule formation and/or stabilization. Also acts as a key regulatory component of the p53/TP53 pathway, and particularly the checkpoint-response pathways critical for oncogenic transformation of cells, by phosphorylating and stabilizating p53/TP53. Phosphorylates its own inhibitors, the protein phosphatase type 1 (PP1) isoforms, to inhibit their activity. Inhibits cilia outgrowth. Required for cilia disassembly via phosphorylation of HDAC6 and subsequent deacetylation of alpha-tubulin. Regulates protein levels of the anti-apoptosis protein BIRC5 by suppressing the expression of the SCF(FBXL7) E3 ubiquitin-protein ligase substrate adapter FBXL7 through the phosphorylation of the transcription factor FOXP1. The sequence is that of Aurora kinase A from Rattus norvegicus (Rat).